We begin with the raw amino-acid sequence, 433 residues long: Phosphomethylpyrimidine synthase (433 aa).

Residues Asn-66, Met-94, Tyr-123, His-162, 184 to 186 (SRG), 225 to 228 (DALR), and Glu-264 contribute to the substrate site. His-268 serves as a coordination point for Zn(2+). Residue Tyr-291 participates in substrate binding. His-332 contributes to the Zn(2+) binding site. Cys-408, Cys-411, and Cys-415 together coordinate [4Fe-4S] cluster.

This sequence belongs to the ThiC family. [4Fe-4S] cluster is required as a cofactor.

The catalysed reaction is 5-amino-1-(5-phospho-beta-D-ribosyl)imidazole + S-adenosyl-L-methionine = 4-amino-2-methyl-5-(phosphooxymethyl)pyrimidine + CO + 5'-deoxyadenosine + formate + L-methionine + 3 H(+). Its pathway is cofactor biosynthesis; thiamine diphosphate biosynthesis. In terms of biological role, catalyzes the synthesis of the hydroxymethylpyrimidine phosphate (HMP-P) moiety of thiamine from aminoimidazole ribotide (AIR) in a radical S-adenosyl-L-methionine (SAM)-dependent reaction. The sequence is that of Phosphomethylpyrimidine synthase from Saccharolobus islandicus (strain M.16.27) (Sulfolobus islandicus).